Here is a 129-residue protein sequence, read N- to C-terminus: Small ribosomal subunit protein uS11 (129 aa).

The protein belongs to the universal ribosomal protein uS11 family. As to quaternary structure, part of the 30S ribosomal subunit. Interacts with proteins S7 and S18. Binds to IF-3.

Functionally, located on the platform of the 30S subunit, it bridges several disparate RNA helices of the 16S rRNA. Forms part of the Shine-Dalgarno cleft in the 70S ribosome. The polypeptide is Small ribosomal subunit protein uS11 (Bradyrhizobium sp. (strain BTAi1 / ATCC BAA-1182)).